Reading from the N-terminus, the 311-residue chain is Methionyl-tRNA formyltransferase (311 aa).

Residue 112 to 115 (SLLP) coordinates (6S)-5,6,7,8-tetrahydrofolate.

Belongs to the Fmt family.

It carries out the reaction L-methionyl-tRNA(fMet) + (6R)-10-formyltetrahydrofolate = N-formyl-L-methionyl-tRNA(fMet) + (6S)-5,6,7,8-tetrahydrofolate + H(+). Its function is as follows. Attaches a formyl group to the free amino group of methionyl-tRNA(fMet). The formyl group appears to play a dual role in the initiator identity of N-formylmethionyl-tRNA by promoting its recognition by IF2 and preventing the misappropriation of this tRNA by the elongation apparatus. This Rhizobium etli (strain ATCC 51251 / DSM 11541 / JCM 21823 / NBRC 15573 / CFN 42) protein is Methionyl-tRNA formyltransferase.